Reading from the N-terminus, the 300-residue chain is MNTLVLKIDAILSKHLKKQLAPYTISSQNTYVAFAAKKNGVTVLLYKSGKLVLQGNGANALAQELNLPVAKTVFEASNNSQDIPIIGSDEVGNGSYFGGIAVVASFVDPKDHSFLKKLGVDDSKKLSDKTIQQIAPLLEKQIPHQSLLLSPKKYNELVGKSKPYNAISIKVALHNQAIFLLLQKGIQPKQIVIDAFTSQSNYEKHLKKEKNHFPNPLTFQEKAESHYLAVAVSSIIARNLFLDNLDQLGQDLGYQLPSGAGSASDKVASQLLAAYGMSSLEYSAKLHFANTHKAQALLTK.

The RNase H type-2 domain maps to 83–300 (IPIIGSDEVG…THKAQALLTK (218 aa)). The a divalent metal cation site is built by D89, E90, and D194.

It belongs to the RNase HII family. RnhC subfamily. The cofactor is Mn(2+). Requires Mg(2+) as cofactor.

It is found in the cytoplasm. The catalysed reaction is Endonucleolytic cleavage to 5'-phosphomonoester.. Endonuclease that specifically degrades the RNA of RNA-DNA hybrids. The sequence is that of Ribonuclease HIII from Streptococcus pyogenes serotype M1.